A 218-amino-acid chain; its full sequence is UPF0502 protein CJA_1529 (218 aa).

It belongs to the UPF0502 family.

This Cellvibrio japonicus (strain Ueda107) (Pseudomonas fluorescens subsp. cellulosa) protein is UPF0502 protein CJA_1529.